A 167-amino-acid chain; its full sequence is Ribosome maturation factor RimM (167 aa).

A PRC barrel domain is found at 94-165; sequence ENEYYYSDII…KIIITPMEGL (72 aa).

Belongs to the RimM family. Binds ribosomal protein uS19.

The protein localises to the cytoplasm. In terms of biological role, an accessory protein needed during the final step in the assembly of 30S ribosomal subunit, possibly for assembly of the head region. Essential for efficient processing of 16S rRNA. May be needed both before and after RbfA during the maturation of 16S rRNA. It has affinity for free ribosomal 30S subunits but not for 70S ribosomes. The chain is Ribosome maturation factor RimM from Staphylococcus aureus (strain bovine RF122 / ET3-1).